Reading from the N-terminus, the 81-residue chain is Photosystem I iron-sulfur center (81 aa).

2 4Fe-4S ferredoxin-type domains span residues 1-31 and 39-68; these read MSHK…MVPW and IASS…IRVY. Residues Cys-11, Cys-14, Cys-17, Cys-21, Cys-48, Cys-51, Cys-54, and Cys-58 each contribute to the [4Fe-4S] cluster site.

The cyanobacterial PSI reaction center is composed of one copy each of PsaA,B,C,D,E,F,I,J,K,L,M and X, and forms trimeric complexes. The cofactor is [4Fe-4S] cluster.

Its subcellular location is the cellular thylakoid membrane. The enzyme catalyses reduced [plastocyanin] + hnu + oxidized [2Fe-2S]-[ferredoxin] = oxidized [plastocyanin] + reduced [2Fe-2S]-[ferredoxin]. Its function is as follows. Apoprotein for the two 4Fe-4S centers FA and FB of photosystem I (PSI); essential for photochemical activity. FB is the terminal electron acceptor of PSI, donating electrons to ferredoxin. The C-terminus interacts with PsaA/B/D and helps assemble the protein into the PSI complex. Required for binding of PsaD and PsaE to PSI. PSI is a plastocyanin/cytochrome c6-ferredoxin oxidoreductase, converting photonic excitation into a charge separation, which transfers an electron from the donor P700 chlorophyll pair to the spectroscopically characterized acceptors A0, A1, FX, FA and FB in turn. In Rippkaea orientalis (strain PCC 8801 / RF-1) (Cyanothece sp. (strain PCC 8801)), this protein is Photosystem I iron-sulfur center.